A 509-amino-acid polypeptide reads, in one-letter code: DEAD-box ATP-dependent RNA helicase CshA (509 aa).

The short motif at 2-30 (QNFKELGISDKTVQTLEAMGFKEPTPIQK) is the Q motif element. Residues 33-203 (IPYALEGDDI…QQFMKAPKII (171 aa)) enclose the Helicase ATP-binding domain. 46 to 53 (AQTGTGKT) provides a ligand contact to ATP. Positions 150-153 (DEAD) match the DEAD box motif. One can recognise a Helicase C-terminal domain in the interval 214 to 375 (QIDEYYTIVK…LRPPHRKEVL (162 aa)). 2 stretches are compositionally biased toward basic residues: residues 440-459 (ARKN…KRGN) and 467-482 (RRSK…KKNQ). The segment at 440-509 (ARKNRSSKGG…KGRTFADHQK (70 aa)) is disordered. Basic and acidic residues predominate over residues 483–492 (KKFDRRDKQQ).

It belongs to the DEAD box helicase family. CshA subfamily. Oligomerizes, may be a member of the RNA degradosome.

Its subcellular location is the cytoplasm. It catalyses the reaction ATP + H2O = ADP + phosphate + H(+). In terms of biological role, DEAD-box RNA helicase possibly involved in RNA degradation. Unwinds dsRNA in both 5'- and 3'-directions, has RNA-dependent ATPase activity. The polypeptide is DEAD-box ATP-dependent RNA helicase CshA (Staphylococcus epidermidis (strain ATCC 12228 / FDA PCI 1200)).